The sequence spans 281 residues: Nucleoid occlusion protein (281 aa).

A DNA-binding region (H-T-H motif) is located at residues 145-164 (EALAQRLGKGQSTIANKLRL).

Belongs to the ParB family.

The protein localises to the cytoplasm. The protein resides in the nucleoid. Effects nucleoid occlusion by binding relatively nonspecifically to DNA and preventing the assembly of the division machinery in the vicinity of the nucleoid, especially under conditions that disturb the cell cycle. It helps to coordinate cell division and chromosome segregation by preventing the formation of the Z ring through the nucleoid, which would cause chromosome breakage. In Geobacillus sp. (strain WCH70), this protein is Nucleoid occlusion protein.